A 192-amino-acid chain; its full sequence is Large ribosomal subunit protein bL9 (192 aa).

A disordered region spans residues 172-192 (DALRPEDFFDPEADGIDEDEA). Over residues 179–192 (FFDPEADGIDEDEA) the composition is skewed to acidic residues.

Belongs to the bacterial ribosomal protein bL9 family.

Its function is as follows. Binds to the 23S rRNA. This chain is Large ribosomal subunit protein bL9, found in Rhizobium etli (strain CIAT 652).